The chain runs to 168 residues: Ribosome maturation factor RimM (168 aa).

One can recognise a PRC barrel domain in the interval Glu-96–Leu-168.

The protein belongs to the RimM family. Binds ribosomal protein uS19.

The protein resides in the cytoplasm. Its function is as follows. An accessory protein needed during the final step in the assembly of 30S ribosomal subunit, possibly for assembly of the head region. Essential for efficient processing of 16S rRNA. May be needed both before and after RbfA during the maturation of 16S rRNA. It has affinity for free ribosomal 30S subunits but not for 70S ribosomes. This is Ribosome maturation factor RimM from Caldanaerobacter subterraneus subsp. tengcongensis (strain DSM 15242 / JCM 11007 / NBRC 100824 / MB4) (Thermoanaerobacter tengcongensis).